Consider the following 438-residue polypeptide: Xylose isomerase (438 aa).

Catalysis depends on residues H100 and D103. Mg(2+) is bound by residues E231, E267, H270, D295, D306, D308, and D338.

It belongs to the xylose isomerase family. In terms of assembly, homotetramer. Requires Mg(2+) as cofactor.

Its subcellular location is the cytoplasm. It catalyses the reaction alpha-D-xylose = alpha-D-xylulofuranose. In Pseudomonas syringae pv. tomato (strain ATCC BAA-871 / DC3000), this protein is Xylose isomerase.